The primary structure comprises 449 residues: Elongation factor 1-alpha (449 aa).

The region spanning 5–234 (KQHVSIVVIG…DNCDPPKRPV (230 aa)) is the tr-type G domain. A G1 region spans residues 14–21 (GHVDSGKS). GTP is bound at residue 14-21 (GHVDSGKS). The residue at position 55 (lysine 55) is an N6,N6-dimethyllysine. The segment at 70–74 (GITID) is G2. An N6,N6,N6-trimethyllysine modification is found at lysine 79. Residues 91–94 (DAPG) form a G3 region. Residues 91–95 (DAPGH) and 153–156 (NKMD) each bind GTP. A G4 region spans residues 153 to 156 (NKMD). Lysine 187 bears the N6,N6,N6-trimethyllysine mark. A G5 region spans residues 194–196 (SGW). At lysine 265 the chain carries N6-methyllysine. 2 positions are modified to N6,N6,N6-trimethyllysine: lysine 310 and lysine 400.

The protein belongs to the TRAFAC class translation factor GTPase superfamily. Classic translation factor GTPase family. EF-Tu/EF-1A subfamily.

Its subcellular location is the cytoplasm. Functionally, this protein promotes the GTP-dependent binding of aminoacyl-tRNA to the A-site of ribosomes during protein biosynthesis. The polypeptide is Elongation factor 1-alpha (Pyropia yezoensis (Susabi-nori)).